A 155-amino-acid chain; its full sequence is Protein-export protein SecB (155 aa).

The protein belongs to the SecB family. In terms of assembly, homotetramer, a dimer of dimers. One homotetramer interacts with 1 SecA dimer.

The protein localises to the cytoplasm. One of the proteins required for the normal export of preproteins out of the cell cytoplasm. It is a molecular chaperone that binds to a subset of precursor proteins, maintaining them in a translocation-competent state. It also specifically binds to its receptor SecA. This chain is Protein-export protein SecB, found in Psychromonas ingrahamii (strain DSM 17664 / CCUG 51855 / 37).